Here is a 205-residue protein sequence, read N- to C-terminus: Venom allergen 5 (205 aa).

Disulfide bonds link cysteine 4/cysteine 16, cysteine 8/cysteine 104, cysteine 28/cysteine 96, and cysteine 171/cysteine 188. The 144-residue stretch at 47 to 190 folds into the SCP domain; it reads VNEHNRFRQK…MQHHYLICNY (144 aa).

It belongs to the CRISP family. Venom allergen 5-like subfamily. Expressed by the venom gland.

It localises to the secreted. In Polistes fuscatus (Paper wasp), this protein is Venom allergen 5.